The chain runs to 456 residues: Phospholipase A1 member A (456 aa).

A signal peptide spans Met1–Gly25. Ser166 acts as the Nucleophile in catalysis. Asp190 serves as the catalytic Charge relay system. Residues Cys245 and Cys258 are joined by a disulfide bond. Catalysis depends on His260, which acts as the Charge relay system. Cystine bridges form between Cys282-Cys293 and Cys296-Cys304. Asn365 carries N-linked (GlcNAc...) asparagine glycosylation.

Belongs to the AB hydrolase superfamily. Lipase family.

It is found in the secreted. The enzyme catalyses a 1,2-diacyl-sn-glycero-3-phospho-L-serine + H2O = a 2-acyl-sn-glycero-3-phospho-L-serine + a fatty acid + H(+). It catalyses the reaction 1,2-di-(9Z)-octadecenoyl-sn-glycero-3-phospho-L-serine + H2O = 2-(9Z-octadecenoyl)-sn-glycero-3-phospho-L-serine + (9Z)-octadecenoate + H(+). It carries out the reaction 1-hexadecanoyl-2-(5Z,8Z,11Z,14Z-eicosatetraenoyl)-sn-glycero-3-phospho-L-serine + H2O = 2-(5Z,8Z,11Z,14Z)-eicosatetraenoyl-sn-glycero-3-phospho-L-serine + hexadecanoate + H(+). The catalysed reaction is a 1-acyl-sn-glycero-3-phospho-L-serine + H2O = sn-glycero-3-phospho-L-serine + a fatty acid + H(+). The enzyme catalyses 1-(9Z-octadecenoyl)-sn-glycero-3-phospho-L-serine + H2O = sn-glycero-3-phospho-L-serine + (9Z)-octadecenoate + H(+). In terms of biological role, hydrolyzes the ester bond of the acyl group attached at the sn-1 position of phosphatidylserines (phospholipase A1 activity) and 1-acyl-2-lysophosphatidylserines (lysophospholipase activity) in the pathway of phosphatidylserines acyl chain remodeling. Cleaves phosphatidylserines exposed on the outer leaflet of the plasma membrane of apoptotic cells producing 2-acyl-1-lysophosphatidylserines, which in turn enhance mast cell activation and histamine production. Has no activity toward other glycerophospholipids including phosphatidylcholines, phosphatidylethanolamines, phosphatidic acids or phosphatidylinositols, or glycerolipids such as triolein. The sequence is that of Phospholipase A1 member A from Mus musculus (Mouse).